The primary structure comprises 821 residues: Ent-pimara-8(14),15-diene synthase (821 aa).

Mg(2+) contacts are provided by Asp556, Asp560, Asn701, Thr705, and Glu709. The DDXXD motif motif lies at 556–560; it reads DDFFD.

The protein belongs to the terpene synthase family. It depends on Mg(2+) as a cofactor. Highly expressed in roots, at intermediate levels in stems and at lower levels in leaves.

It carries out the reaction ent-copalyl diphosphate = ent-pimara-8(14),15-diene + diphosphate. It participates in secondary metabolite biosynthesis; terpenoid biosynthesis. Functionally, involved in the biosynthesis of ent-kaurene diterpenoids natural products. Catalyzes the conversion of ent-copalyl diphosphate to ent-pimara-8(14),15-diene. This is Ent-pimara-8(14),15-diene synthase from Oryza sativa subsp. japonica (Rice).